A 360-amino-acid polypeptide reads, in one-letter code: Glycerol-1-phosphate dehydrogenase [NAD(P)+] (360 aa).

NAD(+) is bound by residues 108-112 (GRVID) and 130-133 (TAAS). Aspartate 135 contributes to the substrate binding site. Serine 139 is a binding site for NAD(+). Position 182 (aspartate 182) interacts with substrate. Aspartate 182 and histidine 262 together coordinate Zn(2+). Substrate is bound at residue histidine 266. Histidine 278 lines the Zn(2+) pocket.

The protein belongs to the glycerol-1-phosphate dehydrogenase family. It depends on Zn(2+) as a cofactor.

Its subcellular location is the cytoplasm. The catalysed reaction is sn-glycerol 1-phosphate + NAD(+) = dihydroxyacetone phosphate + NADH + H(+). It catalyses the reaction sn-glycerol 1-phosphate + NADP(+) = dihydroxyacetone phosphate + NADPH + H(+). Its pathway is membrane lipid metabolism; glycerophospholipid metabolism. Functionally, catalyzes the NAD(P)H-dependent reduction of dihydroxyacetonephosphate (DHAP or glycerone phosphate) to glycerol 1-phosphate (G1P). The G1P thus generated is used as the glycerophosphate backbone of phospholipids in the cellular membranes of Archaea. The polypeptide is Glycerol-1-phosphate dehydrogenase [NAD(P)+] (Methanoculleus marisnigri (strain ATCC 35101 / DSM 1498 / JR1)).